Here is a 426-residue protein sequence, read N- to C-terminus: Histidine--tRNA ligase (426 aa).

This sequence belongs to the class-II aminoacyl-tRNA synthetase family. As to quaternary structure, homodimer.

The protein resides in the cytoplasm. It carries out the reaction tRNA(His) + L-histidine + ATP = L-histidyl-tRNA(His) + AMP + diphosphate + H(+). This Prochlorococcus marinus (strain AS9601) protein is Histidine--tRNA ligase.